Here is a 224-residue protein sequence, read N- to C-terminus: 4-aminobenzoate synthase (224 aa).

Fe(2+)-binding residues include Glu-77, His-84, Glu-138, His-169, Asp-173, and His-176.

The protein belongs to the CADD family. In terms of assembly, homodimer. Fe(2+) is required as a cofactor. Requires Mn(2+) as cofactor.

Involved in de novo para-aminobenzoate (PABA) biosynthesis. Acts as a self-sacrificing or 'suicide' enzyme that utilizes its own active site tyrosine residue(s) as the substrate for PABA synthesis. The side chain of the tyrosine residue is released from the protein backbone via cleavage of the C(alpha)-C(beta) bond, leaving a glycine in place of the original tyrosine residue. Reaction requires O(2) and a reduced dimetal cofactor. This chain is 4-aminobenzoate synthase, found in Chlamydia pneumoniae (Chlamydophila pneumoniae).